The sequence spans 241 residues: Demethylmenaquinone methyltransferase (241 aa).

S-adenosyl-L-methionine is bound by residues threonine 60, aspartate 81, and 106-107 (DA).

The protein belongs to the class I-like SAM-binding methyltransferase superfamily. MenG/UbiE family.

It catalyses the reaction a 2-demethylmenaquinol + S-adenosyl-L-methionine = a menaquinol + S-adenosyl-L-homocysteine + H(+). The protein operates within quinol/quinone metabolism; menaquinone biosynthesis; menaquinol from 1,4-dihydroxy-2-naphthoate: step 2/2. In terms of biological role, methyltransferase required for the conversion of demethylmenaquinol (DMKH2) to menaquinol (MKH2). The chain is Demethylmenaquinone methyltransferase from Staphylococcus carnosus (strain TM300).